A 667-amino-acid polypeptide reads, in one-letter code: UvrABC system protein B (667 aa).

One can recognise a Helicase ATP-binding domain in the interval 25 to 414; that stretch reads TGLQRGDKHQ…GVVVEQIIRP (390 aa). Residue 38–45 coordinates ATP; sequence GVTGSGKT. Residues 91 to 114 carry the Beta-hairpin motif; it reads YYDYYQPEAYVPTTDTFIEKDSSI. The Helicase C-terminal domain occupies 430-596; it reads QVDDLIHEIR…TVKKSLRSIL (167 aa). The region spanning 624 to 659 is the UVR domain; sequence KNEIARVKEEMLAAAANLEFEKAAELRDRMLELDKL.

This sequence belongs to the UvrB family. In terms of assembly, forms a heterotetramer with UvrA during the search for lesions. Interacts with UvrC in an incision complex.

It is found in the cytoplasm. In terms of biological role, the UvrABC repair system catalyzes the recognition and processing of DNA lesions. A damage recognition complex composed of 2 UvrA and 2 UvrB subunits scans DNA for abnormalities. Upon binding of the UvrA(2)B(2) complex to a putative damaged site, the DNA wraps around one UvrB monomer. DNA wrap is dependent on ATP binding by UvrB and probably causes local melting of the DNA helix, facilitating insertion of UvrB beta-hairpin between the DNA strands. Then UvrB probes one DNA strand for the presence of a lesion. If a lesion is found the UvrA subunits dissociate and the UvrB-DNA preincision complex is formed. This complex is subsequently bound by UvrC and the second UvrB is released. If no lesion is found, the DNA wraps around the other UvrB subunit that will check the other stand for damage. The protein is UvrABC system protein B of Syntrophotalea carbinolica (strain DSM 2380 / NBRC 103641 / GraBd1) (Pelobacter carbinolicus).